A 342-amino-acid polypeptide reads, in one-letter code: Phenylalanine--tRNA ligase alpha subunit (342 aa).

E260 contributes to the Mg(2+) binding site.

Belongs to the class-II aminoacyl-tRNA synthetase family. Phe-tRNA synthetase alpha subunit type 1 subfamily. In terms of assembly, tetramer of two alpha and two beta subunits. The cofactor is Mg(2+).

Its subcellular location is the cytoplasm. The catalysed reaction is tRNA(Phe) + L-phenylalanine + ATP = L-phenylalanyl-tRNA(Phe) + AMP + diphosphate + H(+). In Nocardia farcinica (strain IFM 10152), this protein is Phenylalanine--tRNA ligase alpha subunit.